The sequence spans 156 residues: CD-NTase/cGAS isopeptidase (156 aa).

The MPN domain maps to 9-147; sequence IDDFDNHVVI…WIGKKIKNDI (139 aa). The active-site Proton donor/acceptor is the E38. The Zn(2+) site is built by H100, H102, and D113. Positions 100-113 match the JAMM motif motif; it reads HTHPEDFPHPSFID.

It belongs to the peptidase M67B family. Cap3 isopeptidase subfamily.

Its function is as follows. Metalloprotease priming reversal component of a CBASS antivirus system. CBASS (cyclic oligonucleotide-based antiphage signaling system) provides immunity against bacteriophages. The CD-NTase protein (DncV) synthesizes cyclic nucleotides in response to infection; these serve as specific second messenger signals. The signals activate a diverse range of effectors, leading to bacterial cell death and thus abortive phage infection. A type II-A(GA) CBASS system. Functionally, reverses the primed state of DncV, the CD-NTase, cleaving it from cellular proteins. Cleaves a Sumo-DncV-DncV fusion protein precisely between the 2 DncV moieties. Protects E.coli against phage infection. When capV and dncV are introduced in E.coli MG1655 there is 1000-fold protection against phage P1; protection against other phage (T4, T5 and T6) requires the 2 subsequent genes. In another paper the capV-dncV-cap2-cap3 operon gives 10(4)-10(5)-fold protection against phages lambda, T2, T4 and T6, about 1000-fold protection against P1 and 10-fold protection against T5. The protein is CD-NTase/cGAS isopeptidase of Escherichia coli (strain TW11681).